Consider the following 460-residue polypeptide: Argininosuccinate lyase (460 aa).

The protein belongs to the lyase 1 family. Argininosuccinate lyase subfamily.

The protein resides in the cytoplasm. It carries out the reaction 2-(N(omega)-L-arginino)succinate = fumarate + L-arginine. Its pathway is amino-acid biosynthesis; L-arginine biosynthesis; L-arginine from L-ornithine and carbamoyl phosphate: step 3/3. This chain is Argininosuccinate lyase, found in Streptococcus mutans serotype c (strain ATCC 700610 / UA159).